Reading from the N-terminus, the 268-residue chain is MDDSTLRRKYPHHEWHAVNEGDSGAFVYQLTGGPEPQPELYAKIAPRAPENSAFDLSGEADRLEWLHRHGIPVPRVVERGADDTAAWLVTEAVPGVAAAEEWPEHQRFAVVEAMAELARALHELPVEDCPSDRRLDAAVAEARRNVAEGLVDLDDLQEERAGWTGDQLLAELDRTRPEKEDLVVCHGDLCPNNVLLDPGTCRVTGVIDVGRLGVADRHADIALAARELEIDEDPWFGPAYAERFLERYGAHRVDKEKLAFYQLLDEFF.

Aspartate 188 acts as the Proton acceptor in catalysis.

It belongs to the aminoglycoside phosphotransferase family.

The enzyme catalyses kanamycin A + ATP = kanamycin 3'-phosphate + ADP + H(+). Functionally, resistance to kanamycin and structurally-related aminoglycosides, including amikacin. This Streptomyces fradiae (Streptomyces roseoflavus) protein is Aminoglycoside 3'-phosphotransferase (aph).